A 283-amino-acid polypeptide reads, in one-letter code: NAD kinase (283 aa).

The active-site Proton acceptor is Asp68. Residues 68-69 (DG), 142-143 (ND), Arg153, Asp172, 183-188 (TAYSLS), and Gln242 each bind NAD(+).

It belongs to the NAD kinase family. Requires a divalent metal cation as cofactor.

The protein localises to the cytoplasm. The catalysed reaction is NAD(+) + ATP = ADP + NADP(+) + H(+). Involved in the regulation of the intracellular balance of NAD and NADP, and is a key enzyme in the biosynthesis of NADP. Catalyzes specifically the phosphorylation on 2'-hydroxyl of the adenosine moiety of NAD to yield NADP. The protein is NAD kinase of Caldanaerobacter subterraneus subsp. tengcongensis (strain DSM 15242 / JCM 11007 / NBRC 100824 / MB4) (Thermoanaerobacter tengcongensis).